The primary structure comprises 446 residues: Xylose isomerase 2 (446 aa).

Catalysis depends on residues H109 and D112. Positions 240, 276, 279, 304, 315, 317, and 347 each coordinate Mg(2+).

This sequence belongs to the xylose isomerase family. As to quaternary structure, homotetramer. It depends on Mg(2+) as a cofactor.

Its subcellular location is the cytoplasm. It catalyses the reaction alpha-D-xylose = alpha-D-xylulofuranose. The polypeptide is Xylose isomerase 2 (Xanthomonas campestris pv. campestris (strain 8004)).